A 287-amino-acid polypeptide reads, in one-letter code: tRNA selenocysteine 1-associated protein 1 (287 aa).

RRM domains follow at residues 3-86 (ASLW…YVTY) and 96-175 (YSLF…VAIP).

It belongs to the RRM TRSPAP family. Component of the tRNA(Sec) complex composed at least of EEFSEC, SECISBP2, SEPHS1, SEPSECS, TRNAU1AP and tRNA(Sec). Found in a complex with tRNA(Sec). Interacts with SEPSECS. Associates with mRNP and/or polysomes. Found in a complex with EEFSEC, SECISBP2, TRNAU1AP and tRNA(Sec).

It is found in the nucleus. Its subcellular location is the cytoplasm. Involved in the early steps of selenocysteine biosynthesis and tRNA(Sec) charging to the later steps resulting in the cotranslational incorporation of selenocysteine into selenoproteins. Stabilizes the SECISBP2, EEFSEC and tRNA(Sec) complex. May be involved in the methylation of tRNA(Sec). Enhances efficiency of selenoproteins synthesis. This Pongo abelii (Sumatran orangutan) protein is tRNA selenocysteine 1-associated protein 1 (TRNAU1AP).